The following is a 495-amino-acid chain: Glycerol kinase (495 aa).

Position 11 (T11) interacts with ADP. T11, T12, and S13 together coordinate ATP. Position 11 (T11) interacts with sn-glycerol 3-phosphate. An ADP-binding site is contributed by R15. Residues R81, E82, Y133, and D242 each contribute to the sn-glycerol 3-phosphate site. Glycerol-binding residues include R81, E82, Y133, D242, and Q243. The ADP site is built by T264 and G307. Residues T264, G307, Q311, and G410 each contribute to the ATP site. ADP is bound at residue G410.

It belongs to the FGGY kinase family.

It catalyses the reaction glycerol + ATP = sn-glycerol 3-phosphate + ADP + H(+). It functions in the pathway polyol metabolism; glycerol degradation via glycerol kinase pathway; sn-glycerol 3-phosphate from glycerol: step 1/1. With respect to regulation, inhibited by fructose 1,6-bisphosphate (FBP). Its function is as follows. Key enzyme in the regulation of glycerol uptake and metabolism. Catalyzes the phosphorylation of glycerol to yield sn-glycerol 3-phosphate. The chain is Glycerol kinase from Roseobacter denitrificans (strain ATCC 33942 / OCh 114) (Erythrobacter sp. (strain OCh 114)).